Reading from the N-terminus, the 1092-residue chain is MINKKNNLLTKKKPIANKSNKYAIRKFTVGTASIVIGATLLFGLGHNEAKAEENSVQDVKDSNTDDELSDSNDQSSDEEKNDVINNNQSINTDDNNQIIKKEETNNYDGIEKRSEDRTESTTNVDENEATFLQKTPQDNTHLTEEEVKESSSVESSNSSIDTAQQPSHTTINREESVQTSDNVEDSHVSDFANSKIKESNTESGKEENTIEQPNKVKEDSTTSQPSGYTNIDEKISNQDELLNLPINEYENKARPLSTTSAQPSIKRVTVNQLAAEQGSNVNHLIKVTDQSITEGYDDSEGVIKAHDAENLIYDVTFEVDDKVKSGDTMTVDIDKNTVPSDLTDSFTIPKIKDNSGEIIATGTYDNKNKQITYTFTDYVDKYENIKAHLKLTSYIDKSKVPNNNTKLDVEYKTALSSVNKTITVEYQRPNENRTANLQSMFTNIDTKNHTVEQTIYINPLRYSAKETNVNISGNGDEGSTIIDDSTIIKVYKVGDNQNLPDSNRIYDYSEYEDVTNDDYAQLGNNNDVNINFGNIDSPYIIKVISKYDPNKDDYTTIQQTVTMQTTINEYTGEFRTASYDNTIAFSTSSGQGQGDLPPEKTYKIGDYVWEDVDKDGIQNTNDNEKPLSNVLVTLTYPDGTSKSVRTDEDGKYQFDGLKNGLTYKITFETPEGYTPTLKHSGTNPALDSEGNSVWVTINGQDDMTIDSGFYQTPKYSLGNYVWYDTNKDGIQGDDEKGISGVKVTLKDENGNIISTTTTDENGKYQFDNLNSGNYIVHFDKPSGMTQTTTDSGDDDEQDADGEEVHVTITDHDDFSIDNGYYDDESDSDSDSDSDSDSDSDSDSDSDSDSDSDSDSDSDSDSDSDSDSDSDSDSDSDSDSDSDSDSDSDSDSDSDSDSDSDSDSDSDSDSDSDSDSDSDSDSDSDSDSDSDSDSDSDSDSDSDSDSDSDSDSDSDSDSDSDSDSDSDSDSDSDSDSDSDSDSDSDSDSDSDSDSDSDSDSDSDSDSDSDSDSVSDSDSDSDSDSGSDSDSDSDSDSDNDSDLGNSSDKSTKDKLPDTGANEDYGSKGTLLGTLFAGLGALLLGKRRKNRKNKN.

An N-terminal signal peptide occupies residues 1 to 51; the sequence is MINKKNNLLTKKKPIANKSNKYAIRKFTVGTASIVIGATLLFGLGHNEAKA. The segment covering 50–63 has biased composition (basic and acidic residues); it reads KAEENSVQDVKDSN. The tract at residues 50-236 is disordered; sequence KAEENSVQDV…GYTNIDEKIS (187 aa). The tract at residues 52 to 599 is ligand binding A region; it reads EENSVQDVKD…GQGQGDLPPE (548 aa). Acidic residues predominate over residues 64–76; that stretch reads TDDELSDSNDQSS. The span at 84 to 98 shows a compositional bias: low complexity; the sequence is INNNQSINTDDNNQI. Residues 99-119 are compositionally biased toward basic and acidic residues; it reads IKKEETNNYDGIEKRSEDRTE. Residues 120-140 are compositionally biased toward polar residues; the sequence is STTNVDENEATFLQKTPQDNT. Basic and acidic residues predominate over residues 141–151; the sequence is HLTEEEVKESS. Polar residues predominate over residues 160–170; sequence IDTAQQPSHTT. Residues 195–220 show a composition bias toward basic and acidic residues; sequence KIKESNTESGKEENTIEQPNKVKEDS. Ca(2+)-binding residues include E294, S299, V302, and E309. The segment at 579 to 590 is interaction with human fibrinogen; sequence YDNTIAFSTSSG. CNA-B domains are found at residues 600–713 and 714–824; these read KTYK…YQTP and KYSL…YDDE. Residues 780-1068 form a disordered region; it reads KPSGMTQTTT…NEDYGSKGTL (289 aa). Positions 791 to 801 are enriched in acidic residues; sequence SGDDDEQDADG. The span at 802-814 shows a compositional bias: basic and acidic residues; that stretch reads EEVHVTITDHDDF. Acidic residues predominate over residues 820 to 1039; the sequence is YYDDESDSDS…DSDSDSDNDS (220 aa). The short motif at 1053 to 1057 is the LPXTG sorting signal element; it reads LPDTG. Pentaglycyl murein peptidoglycan amidated threonine is present on T1056. The propeptide at 1057-1092 is removed by sortase; it reads GANEDYGSKGTLLGTLFAGLGALLLGKRRKNRKNKN.

Belongs to the serine-aspartate repeat-containing protein (SDr) family.

The protein resides in the secreted. It is found in the cell wall. In terms of biological role, promotes bacterial attachment to both soluble and immobilized forms of fibrinogen in a dose-dependent manner. This binding occurs through the beta-chain of human fibrinogen. Could contribute to the initiation of foreign-body infection by allowing bacteria to adhere to biomaterial surfaces that have become coated with host proteins after implantation. Is important in the pathogenesis of central venous catheter (CVC)-associated infection model. The sequence is that of Fibrinogen-binding protein (fbe) from Staphylococcus epidermidis.